The primary structure comprises 549 residues: SH3 domain-containing protein 21 (549 aa).

Residues 1-56 form a disordered region; that stretch reads MVQSELQLQPRAGRRADASNWGDFGSDKGGLGNTDIPPITPNSQRPPKLSNLTYDS. The span at 41–54 shows a compositional bias: polar residues; it reads PNSQRPPKLSNLTY. The 62-residue stretch at 65–126 folds into the SH3 domain; the sequence is SCPETCRVLF…PDNFVIPPPP (62 aa). 2 disordered regions span residues 142–303 and 332–479; these read PIKE…KPAK and FKKE…KSKN. A compositionally biased stretch (low complexity) spans 211–220; sequence QASQQHSASS. Composition is skewed to basic and acidic residues over residues 267–280 and 332–342; these read PVPKKAPDSDKIPA and FKKEPSRDNDQ. 2 stretches are compositionally biased toward polar residues: residues 343–365 and 439–456; these read CQHLPQGGSTQRPESPAPSNNIQ and VLPQESAPTPQVPHTIQQ. Positions 482–510 form a coiled coil; the sequence is MDVLESLKEEVGLLRSRLELLELKLEQKM. A disordered region spans residues 528-549; that stretch reads QMMQRNRKSFKHAETQTETQTE.

This is SH3 domain-containing protein 21 (Sh3d21) from Mus musculus (Mouse).